A 513-amino-acid chain; its full sequence is Chromosomal replication initiator protein DnaA (513 aa).

Positions 1–87 (MSVELWQQCV…IGSKRSSAPR (87 aa)) are domain I, interacts with DnaA modulators. A domain II region spans residues 87-176 (RAAPNAPLAA…QVEGALKHTS (90 aa)). The interval 113-163 (AAPAPAPAPTSAPAKKAAAQKAAEVSEEPSRDSFDPMAGASSQQAPVRAEQ) is disordered. Over residues 123–135 (SAPAKKAAAQKAA) the composition is skewed to low complexity. The tract at residues 177–393 (YLNRTFTFEN…GALKRVIAHS (217 aa)) is domain III, AAA+ region. ATP-binding residues include glycine 221, glycine 223, lysine 224, and threonine 225. Residues 394 to 513 (HFMGRDITIE…YKNLLRTLTT (120 aa)) form a domain IV, binds dsDNA region.

It belongs to the DnaA family. As to quaternary structure, oligomerizes as a right-handed, spiral filament on DNA at oriC.

The protein resides in the cytoplasm. Its function is as follows. Plays an essential role in the initiation and regulation of chromosomal replication. ATP-DnaA binds to the origin of replication (oriC) to initiate formation of the DNA replication initiation complex once per cell cycle. Binds the DnaA box (a 9 base pair repeat at the origin) and separates the double-stranded (ds)DNA. Forms a right-handed helical filament on oriC DNA; dsDNA binds to the exterior of the filament while single-stranded (ss)DNA is stabiized in the filament's interior. The ATP-DnaA-oriC complex binds and stabilizes one strand of the AT-rich DNA unwinding element (DUE), permitting loading of DNA polymerase. After initiation quickly degrades to an ADP-DnaA complex that is not apt for DNA replication. Binds acidic phospholipids. The polypeptide is Chromosomal replication initiator protein DnaA (Pseudomonas fluorescens (strain ATCC BAA-477 / NRRL B-23932 / Pf-5)).